The following is a 1447-amino-acid chain: MKKLFVVLVVMPLIYGDNFPCSKLTNRTIGNQWNLIETFLLNYSSRLPPNSDVVLGDYFPTVQPWFNCIRNNSNDLYVTLENLKALYWDYATENITWNHRQRLNVVVNGYPYSITVTTTRNFNSAEGAIICICKGSPPTTTTESSLTCNWGSECRLNHKFPICPSNSEANCGNMLYGLQWFADEVVAYLHGASYRISFENQWSGTVTFGDMRATTLEVAGTLVDLWWFNPVYDVSYYRVNNKNGTTVVSNCTDQCASYVANVFTTQPGGFIPSDFSFNNWFLLTNSSTLVSGKLVTKQPLLVNCLWPVPSFEEAASTFCFEGAGFDQCNGAVLNNTVDVIRFNLNFTTNVQSGKGATVFSLNTTGGVTLEISCYTVSDSSFFSYGEIPFGVTDGPRYCYVHYNGTALKYLGTLPPSVKEIAISKWGHFYINGYNFFSTFPIDCISFNLTTGDSDVFWTIAYTSYTEALVQVENTAITKVTYCNSHVNNIKCSQITANLNNGFYPVSSSEVGLVNKSVVLLPSFYTHTIVNITIGLGMKRSGYGQPIASTLSNITLPMQDHNTDVYCIRSDQFSVYVHSTCKSALWDNIFKRNCTDVLDATAVIKTGTCPFSFDKLNNYLTFNKFCLSLSPVGANCKFDVAARTRTNEQVVRSLYVIYEEGDNIVGVPSDNSGVHDLSVLHLDSCTDYNIYGRTGVGIIRQTNRTLLSGLYYTSLSGDLLGFKNVSDGVIYSVTPCDVSAQAAVIDGTIVGAITSINSELLGLTHWTTTPNFYYYSIYNYTNDRTRGTAIDSNDVDCEPVITYSNIGVCKNGAFVFINVTHSDGDVQPISTGNVTIPTNFTISVQVEYIQVYTTPVSIDCSRYVCNGNPRCNKLLTQYVSACQTIEQALAMGARLENMEVDSMLFVSENALKLASVEAFNSSETLDPIYKEWPNIGGSWLEGLKYILPSHNSKRKYRSAIEDLLFDKVVTSGLGTVDEDYKRCTGGYDIADLVCAQYYNGIMVLPGVANADKMTMYTASLAGGITLGALGGGAVAIPFAVAVQARLNYVALQTDVLNKNQQILASAFNQAIGNITQSFGKVNDAIHQTSRGLATVAKALAKVQDVVNIQGQALSHLTVQLQNNFQAISSSISDIYNRLDELSADAQVDRLITGRLTALNAFVSQTLTRQAEVRASRQLAKDKVNECVRSQSQRFGFCGNGTHLFSLANAAPNGMIFFHTVLLPTAYETVTAWPGICASDGDRTFGLVVKDVQLTLFRNLDDKFYLTPRTMYQPRVATSSDFVQIEGCDVLFVNATVSDLPSIIPDYIDINQTVQDILENFRPNWTVPELTFDIFNATYLNLTGEIDDLEFRSEKLHNTTVELAILIDNINNTLVNLEWLNRIETYVKWPWYVWLLIGLVVIFCIPLLLFCCCSTGCCGCIGCLGSCCHSICSRRQFENYEPIEKVHVH.

A signal peptide spans 1–28 (MKKLFVVLVVMPLIYGDNFPCSKLTNRT). 2 S1 regions span residues 17–774 (DNFP…FYYY) and 29–774 (IGNQ…FYYY). Residues 29-1388 (IGNQWNLIET…NRIETYVKWP (1360 aa)) are Virion surface-facing. The interval 655–799 (VIYEEGDNIV…DSNDVDCEPV (145 aa)) is interaction with host ANPEP. The S2 stretch occupies residues 775-1447 (SIYNYTNDRT…YEPIEKVHVH (673 aa)). The interval 1020 to 1041 (AGGITLGALGGGAVAIPFAVAV) is fusion peptide. The segment at 1035-1154 (IPFAVAVQAR…QVDRLITGRL (120 aa)) is heptad repeat 1 (HR1). Coiled-coil stretches lie at residues 1102-1146 (QDVV…DAQV) and 1336-1378 (TYLN…LEWL). The segment at 1303–1400 (PDYIDINQTV…VWLLIGLVVI (98 aa)) is heptad repeat 2 (HR2). A helical transmembrane segment spans residues 1389–1408 (WYVWLLIGLVVIFCIPLLLF). The Intravirion segment spans residues 1409–1447 (CCCSTGCCGCIGCLGSCCHSICSRRQFENYEPIEKVHVH). The short motif at 1443–1447 (KVHVH) is the KxHxx element.

It belongs to the alphacoronaviruses spike protein family. As to quaternary structure, homotrimer. During virus morphogenesis, found in a complex with M and HE proteins. Interacts with host ANPEP.

It is found in the virion membrane. The protein localises to the host endoplasmic reticulum-Golgi intermediate compartment membrane. In terms of biological role, S1 region attaches the virion to the cell membrane by interacting with host ANPEP/aminopeptidase N, initiating the infection. Binding to the receptor probably induces conformational changes in the S glycoprotein unmasking the fusion peptide of S2 region and activating membranes fusion. S2 region belongs to the class I viral fusion protein. Under the current model, the protein has at least 3 conformational states: pre-fusion native state, pre-hairpin intermediate state, and post-fusion hairpin state. During viral and target cell membrane fusion, the coiled coil regions (heptad repeats) regions assume a trimer-of-hairpins structure, positioning the fusion peptide in close proximity to the C-terminal region of the ectodomain. The formation of this structure appears to drive apposition and subsequent fusion of viral and target cell membranes. The sequence is that of Spike glycoprotein from Sus scrofa (Pig).